A 205-amino-acid polypeptide reads, in one-letter code: Iron-sulfur assembly protein 2 (205 aa).

C131, C196, and C198 together coordinate Fe cation.

This sequence belongs to the HesB/IscA family.

It localises to the mitochondrion matrix. In terms of biological role, involved in the assembly of mitochondrial and cytoplasmic iron-sulfur proteins. Probably involved in the binding of an intermediate of Fe/S cluster assembly. In Schizosaccharomyces pombe (strain 972 / ATCC 24843) (Fission yeast), this protein is Iron-sulfur assembly protein 2 (isa2).